The sequence spans 193 residues: Ribonuclease HII (193 aa).

The RNase H type-2 domain occupies 15–193 (YIVAGIDEAG…PYHRRSFKCC (179 aa)). 3 residues coordinate a divalent metal cation: Asp21, Glu22, and Asp112.

This sequence belongs to the RNase HII family. Requires Mn(2+) as cofactor. Mg(2+) is required as a cofactor.

It localises to the cytoplasm. The catalysed reaction is Endonucleolytic cleavage to 5'-phosphomonoester.. Functionally, endonuclease that specifically degrades the RNA of RNA-DNA hybrids. In Rickettsia felis (strain ATCC VR-1525 / URRWXCal2) (Rickettsia azadi), this protein is Ribonuclease HII.